The primary structure comprises 252 residues: NAD-dependent protein deacetylase (252 aa).

The 242-residue stretch at 2 to 243 folds into the Deacetylase sirtuin-type domain; that stretch reads DSKRDEKILE…DRVVKELKKI (242 aa). Residues A28, T32, F39, R40, Q109, I111, D112, and H127 each coordinate NAD(+). A nicotinamide-binding site is contributed by F39. Residues I111 and D112 each contribute to the nicotinamide site. H127 functions as the Proton acceptor in the catalytic mechanism. 4 residues coordinate Zn(2+): C135, C138, C148, and C150. Residues T188, S189, and N211 each contribute to the NAD(+) site.

It belongs to the sirtuin family. Class U subfamily. Requires Zn(2+) as cofactor.

It is found in the cytoplasm. It catalyses the reaction N(6)-acetyl-L-lysyl-[protein] + NAD(+) + H2O = 2''-O-acetyl-ADP-D-ribose + nicotinamide + L-lysyl-[protein]. Its function is as follows. NAD-dependent protein deacetylase which modulates the activities of several enzymes which are inactive in their acetylated form. The polypeptide is NAD-dependent protein deacetylase (Fusobacterium nucleatum subsp. nucleatum (strain ATCC 25586 / DSM 15643 / BCRC 10681 / CIP 101130 / JCM 8532 / KCTC 2640 / LMG 13131 / VPI 4355)).